Consider the following 134-residue polypeptide: Spermadhesin-1 (134 aa).

The N-terminal stretch at 1–20 (MKLSSVIPWALLLSTATVDS) is a signal peptide. Disulfide bonds link cysteine 30–cysteine 51 and cysteine 74–cysteine 95. A CUB domain is found at 30 to 131 (CGGILKEESG…SFYEVLYFQD (102 aa)).

It belongs to the spermadhesin family. In terms of tissue distribution, seminal vesicle tissue, ampulla and weakly in tissue of epididymis.

It is found in the secreted. Stimulates cell division and progesterone secretion of bovine granulosa cells in vitro in a potent and dose dependent manner. This protein appears to be a potent growth factor with effects on ovarian granulosa cells. The protein is Spermadhesin-1 (SPADH1) of Bos taurus (Bovine).